Here is a 480-residue protein sequence, read N- to C-terminus: RuvB-like helicase 2 (480 aa).

76–83 (GPPSTGKT) provides a ligand contact to ATP.

Belongs to the RuvB family. May form heterododecamers with RVB1. Component of the SWR1 chromatin remodeling complex, the INO80 chromatin remodeling complex, and of the R2TP complex.

Its subcellular location is the nucleus. The catalysed reaction is ATP + H2O = ADP + phosphate + H(+). Functionally, DNA helicase which participates in several chromatin remodeling complexes, including the SWR1 and the INO80 complexes. The SWR1 complex mediates the ATP-dependent exchange of histone H2A for the H2A variant HZT1 leading to transcriptional regulation of selected genes by chromatin remodeling. The INO80 complex remodels chromatin by shifting nucleosomes and is involved in DNA repair. Also involved in pre-rRNA processing. The sequence is that of RuvB-like helicase 2 (RVB2) from Debaryomyces hansenii (strain ATCC 36239 / CBS 767 / BCRC 21394 / JCM 1990 / NBRC 0083 / IGC 2968) (Yeast).